The sequence spans 103 residues: Large ribosomal subunit protein uL24 (103 aa).

This sequence belongs to the universal ribosomal protein uL24 family. Part of the 50S ribosomal subunit.

One of two assembly initiator proteins, it binds directly to the 5'-end of the 23S rRNA, where it nucleates assembly of the 50S subunit. Its function is as follows. One of the proteins that surrounds the polypeptide exit tunnel on the outside of the subunit. The chain is Large ribosomal subunit protein uL24 from Sinorhizobium medicae (strain WSM419) (Ensifer medicae).